Here is a 288-residue protein sequence, read N- to C-terminus: MIRQWPSPAKLNLFLYITGQREDGYHLLQTLFQFLDYGDTLTIDVRQDDAIHLLTPVAGVPDEQNLIVRAARLLQQHCDRHGLNTAPRGAEISIEKRLPMGGGLGGGSSNAATVLVALNDLWRCGLSDEQLAELGLALGADVPVFVRGHAAFAEGIGERLQPANPQEKWYLVAHPGVSIPTPVIFGDADLKRDTPVRPLNVLLQATYANDCEPIARKRFREVEQLVSWLLEYAPSRLTGTGACVFAEFDTETAARQVLNQAPEWIRGFVARGVNVSPLHRIRSGQIEP.

Lys10 is a catalytic residue. 99–109 is an ATP binding site; it reads PMGGGLGGGSS. Asp141 is an active-site residue.

This sequence belongs to the GHMP kinase family. IspE subfamily. As to quaternary structure, homodimer.

The enzyme catalyses 4-CDP-2-C-methyl-D-erythritol + ATP = 4-CDP-2-C-methyl-D-erythritol 2-phosphate + ADP + H(+). It participates in isoprenoid biosynthesis; isopentenyl diphosphate biosynthesis via DXP pathway; isopentenyl diphosphate from 1-deoxy-D-xylulose 5-phosphate: step 3/6. Its function is as follows. Catalyzes the phosphorylation of the position 2 hydroxy group of 4-diphosphocytidyl-2C-methyl-D-erythritol. This chain is 4-diphosphocytidyl-2-C-methyl-D-erythritol kinase, found in Serratia proteamaculans (strain 568).